The primary structure comprises 77 residues: U10-lycotoxin-Ls1b (77 aa).

The N-terminal stretch at 1–20 (MKLIIFTGLVLFAIVSLIEA) is a signal peptide. A propeptide spanning residues 21-26 (EEESGR) is cleaved from the precursor.

This sequence belongs to the neurotoxin 19 (CSTX) family. 09 (U10-Lctx) subfamily. In terms of processing, contains 4 disulfide bonds. Expressed by the venom gland.

It localises to the secreted. This is U10-lycotoxin-Ls1b from Lycosa singoriensis (Wolf spider).